A 148-amino-acid polypeptide reads, in one-letter code: Calcium-permeable cation-selective channel WeiTsing (148 aa).

Over 1 to 25 (METVSAVNQTLPISGGEPVKFTTYS) the chain is Cytoplasmic. Residues 26-46 (AAVHKVLVMINAGILGLLQLV) form a helical membrane-spanning segment. Topologically, residues 47–51 (SQQSS) are lumenal. The chain crosses the membrane as a helical span at residues 52–72 (VLETHKAAFLCFCVFILFYAV). Over 73–90 (LRVREAMDVRLQPGLVPR) the chain is Cytoplasmic. A helical transmembrane segment spans residues 91-110 (LIGHGSHLFGGLAALVLVSV). The Lumenal portion of the chain corresponds to 111–116 (VSTAFS). Residues 117-133 (IVLFLLWFIWLSAVVYL) form a helical membrane-spanning segment. At 134–148 (ETNKPSACPPQLPPV) the chain is on the cytoplasmic side.

Forms pentamers with a central pore to produce an ion channel.

It localises to the endoplasmic reticulum membrane. It carries out the reaction Ca(2+)(in) = Ca(2+)(out). The catalysed reaction is Na(+)(in) = Na(+)(out). Functionally, calcium-permeable cation-selective channel conferring a broad-spectrum clubroot resistance by supporting cytosolic Ca(2+) increase in root pericycle cells. Triggers immunity toward fungal pathogens such as Plasmodiophora brassicae (Pb) and induces defenses. Also permeable to sodium ion Na(+) and possibly other cations. The polypeptide is Calcium-permeable cation-selective channel WeiTsing (Arabidopsis thaliana (Mouse-ear cress)).